The following is a 92-amino-acid chain: UPF0223 protein SPCG_1392 (92 aa).

It belongs to the UPF0223 family.

The chain is UPF0223 protein SPCG_1392 from Streptococcus pneumoniae (strain CGSP14).